The chain runs to 281 residues: 2-dehydro-3-deoxyphosphooctonate aldolase 1 (281 aa).

It belongs to the KdsA family.

It localises to the cytoplasm. The catalysed reaction is D-arabinose 5-phosphate + phosphoenolpyruvate + H2O = 3-deoxy-alpha-D-manno-2-octulosonate-8-phosphate + phosphate. Its pathway is carbohydrate biosynthesis; 3-deoxy-D-manno-octulosonate biosynthesis; 3-deoxy-D-manno-octulosonate from D-ribulose 5-phosphate: step 2/3. It functions in the pathway bacterial outer membrane biogenesis; lipopolysaccharide biosynthesis. The sequence is that of 2-dehydro-3-deoxyphosphooctonate aldolase 1 (kdsA1) from Pseudomonas putida (strain ATCC 47054 / DSM 6125 / CFBP 8728 / NCIMB 11950 / KT2440).